We begin with the raw amino-acid sequence, 153 residues long: SsrA-binding protein (153 aa).

It belongs to the SmpB family.

It localises to the cytoplasm. Functionally, required for rescue of stalled ribosomes mediated by trans-translation. Binds to transfer-messenger RNA (tmRNA), required for stable association of tmRNA with ribosomes. tmRNA and SmpB together mimic tRNA shape, replacing the anticodon stem-loop with SmpB. tmRNA is encoded by the ssrA gene; the 2 termini fold to resemble tRNA(Ala) and it encodes a 'tag peptide', a short internal open reading frame. During trans-translation Ala-aminoacylated tmRNA acts like a tRNA, entering the A-site of stalled ribosomes, displacing the stalled mRNA. The ribosome then switches to translate the ORF on the tmRNA; the nascent peptide is terminated with the 'tag peptide' encoded by the tmRNA and targeted for degradation. The ribosome is freed to recommence translation, which seems to be the essential function of trans-translation. The chain is SsrA-binding protein from Desulforudis audaxviator (strain MP104C).